The chain runs to 459 residues: Ribulose bisphosphate carboxylase large chain (459 aa).

K4 bears the N6,N6,N6-trimethyllysine mark. Substrate is bound by residues N113 and T163. K165 (proton acceptor) is an active-site residue. A substrate-binding site is contributed by K167. Mg(2+)-binding residues include K191, D193, and E194. Position 191 is an N6-carboxylysine (K191). H284 (proton acceptor) is an active-site residue. Substrate-binding residues include R285, H317, and S369.

This sequence belongs to the RuBisCO large chain family. Type I subfamily. Heterohexadecamer of 8 large chains and 8 small chains; disulfide-linked. The disulfide link is formed within the large subunit homodimers. The cofactor is Mg(2+). Post-translationally, the disulfide bond which can form in the large chain dimeric partners within the hexadecamer appears to be associated with oxidative stress and protein turnover.

The protein resides in the plastid. Its subcellular location is the chloroplast. It catalyses the reaction 2 (2R)-3-phosphoglycerate + 2 H(+) = D-ribulose 1,5-bisphosphate + CO2 + H2O. The enzyme catalyses D-ribulose 1,5-bisphosphate + O2 = 2-phosphoglycolate + (2R)-3-phosphoglycerate + 2 H(+). Its function is as follows. RuBisCO catalyzes two reactions: the carboxylation of D-ribulose 1,5-bisphosphate, the primary event in carbon dioxide fixation, as well as the oxidative fragmentation of the pentose substrate in the photorespiration process. Both reactions occur simultaneously and in competition at the same active site. The polypeptide is Ribulose bisphosphate carboxylase large chain (Ceratopetalum gummiferum (New South Wales Christmas bush)).